The sequence spans 101 residues: Feather keratin Cos1-1/Cos1-3/Cos2-1 (101 aa).

Ser2 is modified (N-acetylserine).

It belongs to the avian keratin family. In terms of assembly, the avian keratins (F-ker, S-ker, C-ker and B-ker) are a complex mixture of very similar polypeptides.

This Columba livia (Rock dove) protein is Feather keratin Cos1-1/Cos1-3/Cos2-1.